A 307-amino-acid chain; its full sequence is Mycothiol acetyltransferase (307 aa).

N-acetyltransferase domains lie at 12 to 152 and 160 to 307; these read TRTD…APIP and VTLR…YQRS. A 1D-myo-inositol 2-(L-cysteinylamino)-2-deoxy-alpha-D-glucopyranoside-binding site is contributed by Glu-43. Residue 87–89 coordinates acetyl-CoA; the sequence is LAV. 3 residues coordinate 1D-myo-inositol 2-(L-cysteinylamino)-2-deoxy-alpha-D-glucopyranoside: Glu-187, Lys-227, and Glu-239. Residues 243 to 245 and 250 to 256 each bind acetyl-CoA; these read LGV and HGGGLGK. Tyr-278 contributes to the 1D-myo-inositol 2-(L-cysteinylamino)-2-deoxy-alpha-D-glucopyranoside binding site.

The protein belongs to the acetyltransferase family. MshD subfamily. Monomer.

The enzyme catalyses 1D-myo-inositol 2-(L-cysteinylamino)-2-deoxy-alpha-D-glucopyranoside + acetyl-CoA = mycothiol + CoA + H(+). Functionally, catalyzes the transfer of acetyl from acetyl-CoA to desacetylmycothiol (Cys-GlcN-Ins) to form mycothiol. The sequence is that of Mycothiol acetyltransferase from Salinispora arenicola (strain CNS-205).